The following is a 603-amino-acid chain: MDTNIINHYDIIIIGGGIAGLSATRHLLLKMPELSGRIAVIEPRSERRDNLDEDYKVGESTVEVSAMFFAKELELQDYLIENHPPKFSLQFHWPRELSKTDTIEDYYSTWAVKNPDIQAFQLNRCKIERDLLKMVIAQGAVYYHGRVRNVDNLDNDDMKSIDVEILSEVESGADFKLQQSIERITLTTDYIVDASGRNFTVGSRTDNILKDPKHLFGLDNASTWVRVKNTERSLFDFKSQDVTCSWTYDTNHFFGPGYWIWMIPLERGSRDYSIGVSYHRDKIQPSQLNSLDKFMSFLEKNQKLLYNLIKSGEIVDFHRWPKLAHTSKTFFSKNNWCVIGDAAAIFDPFYSTGMVMIAMEIECLTEMLKFKLSNAANDYHRRVEAFDKLIRCVTQINNHLIKDHSNHLGNASIMSWRIYFESSTYFSILLPAYIGKYHLCPIFSDHFTTDHENGLALRNQLLATLDYANENSINIGFMDNHRGGQLLGDWSPTSSWDYDHALSLAKYGHKRLNLPKCLSWSNFYLSLIICKLYYRVYGIGALWNSSFFKSLSNTTYRFSKFYFLSKLHSFNMIGTPNNDYYDKIQKDFKSYNYNQNNIVDWKY.

FAD is bound by residues glycine 16, alanine 19, and glutamate 59. Chloride-binding residues include threonine 352 and glycine 353.

The protein belongs to the flavin-dependent halogenase family.

It catalyses the reaction 2,4,6-trihydroxyphenylhexan-1-one + FADH2 + chloride + O2 = (3-chloro-2,4,6-trihydroxyphenyl)hexan-1-one + FAD + 2 H2O + H(+). The enzyme catalyses (3-chloro-2,4,6-trihydroxyphenyl)hexan-1-one + FADH2 + chloride + O2 = (3,5-dichloro-2,4,6-trihydroxyphenyl)hexan-1-one + FAD + 2 H2O. Its function is as follows. Flavin-dependent halogenase; part of the gene cluster that mediates the biosynthesis of DIF-1 (Differentiation Inducing Factor-1), a signal molecule involved in the differentiation of pstO (prestalk-O) cells. The three-step process begins with the formation of (2,4,6-trihydroxyphenyl)-1-hexan-1-one (THPH) by the polyketide synthase StlB. THPH is then dichlorinated by the flavin-dependent halogenase ChlA. The last step of DIF-1 biosynthesis is the O-methylation of dichloro-THPH (or des-methyl-DIF-1) by the methyltransferase DmtA to yield DIF-1. The polypeptide is Flavin-dependent halogenase chlA (Dictyostelium discoideum (Social amoeba)).